The following is a 235-amino-acid chain: RNA-free ribonuclease P (235 aa).

The protein belongs to the HARP family.

It carries out the reaction Endonucleolytic cleavage of RNA, removing 5'-extranucleotides from tRNA precursor.. Its function is as follows. RNA-free RNase P that catalyzes the removal of the 5'-leader sequence from pre-tRNA to produce the mature 5'-terminus. The sequence is that of RNA-free ribonuclease P from Methanothrix thermoacetophila (strain DSM 6194 / JCM 14653 / NBRC 101360 / PT) (Methanosaeta thermophila).